The sequence spans 398 residues: Thyrotropin-releasing hormone receptor (398 aa).

The Extracellular portion of the chain corresponds to 1–28 (MENETGSELNQTQLQPRAVVALEYQVVT). N-linked (GlcNAc...) asparagine glycans are attached at residues asparagine 3 and asparagine 10. The helical transmembrane segment at 29 to 51 (ILLVLIICGLGIVGNIMVVLVVM) threads the bilayer. Residues 52-61 (RTKHMRTPTN) lie on the Cytoplasmic side of the membrane. The chain crosses the membrane as a helical span at residues 62 to 83 (CYLVSLAVADLMVLVAAGLPNI). Residues 84-99 (TDSIYGSWVYGYVGCL) lie on the Extracellular side of the membrane. A disulfide bridge connects residues cysteine 98 and cysteine 179. Residues 100–121 (CITYLQYLGINASSCSITAFTI) form a helical membrane-spanning segment. The Cytoplasmic segment spans residues 122–144 (ERYIAICHPIKAQFLCTFSRAKK). A helical membrane pass occupies residues 145-168 (IIIFVWAFTSIYCMLWFFLLDLNI). The Extracellular segment spans residues 169 to 193 (STYKDAIVVSCGYKISRNYYSPIYL). Residues 194–215 (MDFGVFYVVPMILATVLYGFIA) traverse the membrane as a helical segment. Over 216–266 (RILFLSPIPSDPKENSNTWKNDSTHQNKNLNSKTSNRYFNSTVSSRKQVTK) the chain is Cytoplasmic. A helical membrane pass occupies residues 267 to 288 (MLAVVVILFALLWMPYRTLVVV). Topologically, residues 289-296 (NSFLSSPF) are extracellular. The chain crosses the membrane as a helical span at residues 297-319 (QENWFLLFCRICIYLNSAINPVI). Residues 320–398 (YNLMSQKFRA…LASEVTFSQS (79 aa)) are Cytoplasmic-facing.

It belongs to the G-protein coupled receptor 1 family.

The protein resides in the cell membrane. Its function is as follows. Receptor for thyrotropin-releasing hormone (TRH). Upon ligand binding, this G-protein-coupled receptor triggers activation of the phosphatidylinositol (IP3)-calcium-protein kinase C (PKC) pathway. The sequence is that of Thyrotropin-releasing hormone receptor (TRHR) from Ovis aries (Sheep).